We begin with the raw amino-acid sequence, 344 residues long: Arginine N-succinyltransferase (344 aa).

Leu-125 provides a ligand contact to succinyl-CoA. The active-site Proton donor is His-229.

This sequence belongs to the arginine N-succinyltransferase family.

It carries out the reaction succinyl-CoA + L-arginine = N(2)-succinyl-L-arginine + CoA + H(+). The protein operates within amino-acid degradation; L-arginine degradation via AST pathway; L-glutamate and succinate from L-arginine: step 1/5. Catalyzes the transfer of succinyl-CoA to arginine to produce N(2)-succinylarginine. The sequence is that of Arginine N-succinyltransferase from Salmonella agona (strain SL483).